A 355-amino-acid polypeptide reads, in one-letter code: Probable zinc transporter 12 (355 aa).

A signal peptide spans 1-25 (MSRFRKTLVSAFVLCLVIFPLLVSA). Topologically, residues 26–50 (AEEENQCGGSKGGSAAEKASALKYK) are extracellular. A helical membrane pass occupies residues 51–71 (IIAFFSILIAGVFGVCLPIFG). Topologically, residues 72–77 (LKTESN) are cytoplasmic. A helical transmembrane segment spans residues 78-98 (FFMYVKAFAAGVILATGFVHI). The Extracellular portion of the chain corresponds to 99–116 (LPDATESLTSSCLGEEPP). Residues 117–137 (WGDFPMTGLVAMAASILTMLI) traverse the membrane as a helical segment. At 138–200 (ESFASGYLNR…DDDHIDMRKK (63 aa)) the chain is on the cytoplasmic side. A disordered region spans residues 156 to 183 (TLPVSTGGEEEHAHTGSAHTHASQGHSH). A helical membrane pass occupies residues 201-221 (IVTQILELGIVVHSVIIGISL). Residues 222–231 (GASPSVSTIK) lie on the Extracellular side of the membrane. Residues 232–252 (PLIAAITFHQLFEGFGLGGCI) form a helical membrane-spanning segment. Over 253–261 (SEAKFRVKK) the chain is Cytoplasmic. A helical transmembrane segment spans residues 262–282 (IWVMLMFFALTAPIGIGIGIG). Over 283–302 (VAEIYNENSPMALKVSGFLN) the chain is Extracellular. A helical transmembrane segment spans residues 303–323 (ATASGILIYMALVDLVAPLFM). At 324-334 (NQKTQSSMKIQ) the chain is on the cytoplasmic side. The helical transmembrane segment at 335–355 (VACSVSLVVGAGLMSLLAIWA) threads the bilayer.

Belongs to the ZIP transporter (TC 2.A.5) family.

The protein resides in the cell membrane. Its function is as follows. Zinc transporter involved in zinc uptake in roots. Targeted by BZIP23 transcription factor in response to zinc-deficient conditions. This Arabidopsis thaliana (Mouse-ear cress) protein is Probable zinc transporter 12 (ZIP12).